A 527-amino-acid polypeptide reads, in one-letter code: UPF0053 protein YegH (527 aa).

Transmembrane regions (helical) follow at residues 14-34 (ITLI…IAIL), 51-71 (LLLA…LVTL), 81-101 (FTFS…LFKA), 122-142 (GAKF…FSLD), 145-165 (ITAV…VIAI), 185-205 (IVIL…AEGF), and 207-227 (FVIP…IEAL). 2 consecutive CBS domains span residues 306–366 (MTSR…GEPL) and 371–429 (LIRQ…PNEV).

Belongs to the UPF0053 family.

It localises to the cell membrane. The polypeptide is UPF0053 protein YegH (yegH) (Shigella flexneri).